The primary structure comprises 257 residues: Global transcriptional regulator CodY (257 aa).

The segment at 1–155 (MSLLSKTREL…AATVIGMEIL (155 aa)) is GAF domain. The H-T-H motif DNA-binding region spans 203–222 (ASKVADRVGITRSVIVNALR).

It belongs to the CodY family.

It is found in the cytoplasm. In terms of biological role, DNA-binding global transcriptional regulator which is involved in the adaptive response to starvation and acts by directly or indirectly controlling the expression of numerous genes in response to nutrient availability. During rapid exponential growth, CodY is highly active and represses genes whose products allow adaptation to nutrient depletion. The sequence is that of Global transcriptional regulator CodY from Staphylococcus epidermidis (strain ATCC 12228 / FDA PCI 1200).